The sequence spans 1116 residues: Rho GTPase-activating protein 45 (1116 aa).

A disordered region spans residues 1–72 (MFSRKKRELM…RPTSLSRHAS (72 aa)). Over residues 22-31 (GSPNPQSSSG) the composition is skewed to polar residues. Ser-23, Ser-72, Ser-92, and Ser-98 each carry phosphoserine. Residues 268–538 (EEVDMLLQRC…SSKLYDPGQQ (271 aa)) enclose the F-BAR domain. Positions 375–498 (EHERRRKEIK…QIQEVIRQSD (124 aa)) form a coiled coil. Residues 422 to 457 (VAKAEEEQQGTGPGAGTAASKALDKRRRLEEEAKNK) form a disordered region. A compositionally biased stretch (basic and acidic residues) spans 448 to 457 (RRLEEEAKNK). Residues Ser-568, Ser-577, Ser-591, and Ser-618 each carry the phosphoserine modification. The disordered stretch occupies residues 569-658 (PIMRTRKGSF…MSSSEELGDQ (90 aa)). Over residues 621-635 (ISISDTEVGLDTSSG) the composition is skewed to polar residues. The span at 643–652 (TSSSGTMSSS) shows a compositional bias: low complexity. The segment at 699–744 (THRLRKLRTPAKCRECNSYVYFQGAECEECCLACHKKCLETLAIQC) adopts a Phorbol-ester/DAG-type zinc-finger fold. The Rho-GAP domain maps to 758–971 (QDFSQAALST…TLIVHYGLVF (214 aa)). Residues Ser-946, Ser-1017, Ser-1020, and Ser-1022 each carry the phosphoserine modification. Disordered regions lie at residues 1004-1035 (EEAEDGSRESHAASNDSDSELEDASDPLSSSD) and 1050-1116 (AGLE…PQFV). 2 stretches are compositionally biased toward polar residues: residues 1080–1090 (FNTNQSNNTSR) and 1105–1116 (GGTSQERQPQFV).

The protein localises to the cytoplasm. It localises to the cell projection. It is found in the ruffle membrane. Its function is as follows. Contains a GTPase activator for the Rho-type GTPases (RhoGAP) domain that would be able to negatively regulate the actin cytoskeleton as well as cell spreading. However, also contains N-terminally a BAR-domin which is able to play an autoinhibitory effect on this RhoGAP activity. In Mus musculus (Mouse), this protein is Rho GTPase-activating protein 45.